A 304-amino-acid polypeptide reads, in one-letter code: N-carbamoyl-D-amino acid hydrolase (304 aa).

Residues 5–276 form the CN hydrolase domain; that stretch reads MILAVGQQGP…DEVITAAVCL (272 aa). Active-site residues include Glu-47, Lys-127, and Cys-172.

As to quaternary structure, homotetramer.

It carries out the reaction an N-carbamoyl-D-amino acid + H2O + 2 H(+) = a D-alpha-amino acid + NH4(+) + CO2. The activity decreases with increasing concentration of H(2)O(2). Has 68% and 43% of activity remaining upon treatment with 0.1 and 0.2 mM H(2)O(2) for 30 minutes, respectively. Inhibited significantly by 2 mM Zn(2+), Cu(2+) and Ag(+), moderately by Co(2+), Mn(2+), Sn(2+) and Mg(2+), and only slightly by Ba(2+). Slightly activated by Fe(2+) and Ca(2+). No effect on activity by metal chelators EDTA and 8-hydroxyquinoline at 2 mM or by dithiothreitol, 2-mercaptoethanol or phenylmethanesulfonyl fluoride. Its function is as follows. Catalyzes the hydrolysis of N-carbamoyl-D-amino acids to the corresponding D-amino acids. Hydrolyzes aromatic and aliphatic N-carbamoyl-D-amino acids in vitro. Effectively hydrolyzes N-carbamoyl-D-p-hydroxyphenylglycine and N-carbamoyl-DL-p-hydroxyphenylglycine, and to a lesser extent N-carbamoyl-D-methionine. No activity for N-carbamoyl-L-amino acids, N-carbamoyl-beta-alanine or (RS)-alpha-ethyl-N-carbamoylphenylglycine in vitro. This is N-carbamoyl-D-amino acid hydrolase from Ensifer adhaerens (Sinorhizobium morelense).